The chain runs to 550 residues: 65-kDa microtubule-associated protein 5 (550 aa).

Coiled coils occupy residues Asn-46–Asn-174 and Ile-288–Val-310. The disordered stretch occupies residues Gln-471–Lys-531. Polar residues predominate over residues Gln-502 to Lys-511.

The protein belongs to the MAP65/ASE1 family. Forms a dimer. Binds to MT, mostly with coaligned MT, both between parallel or antiparallel, forming thick bundles. Bundles polymerized MT via the formation of 25-nm crossbridges with cortical MT.

It localises to the nucleus. It is found in the cytoplasm. The protein localises to the cytoskeleton. The protein resides in the spindle. Its subcellular location is the phragmoplast. It localises to the cell cortex. It is found in the cell junction. The protein localises to the plasmodesma. Microtubule-associated protein that bundle and stabilize adjacent microtubules (MT) of the cell cortex. Confers MT resistance to the drug oryzalin. Promotes the formation of a planar network of antiparallel microtubules. The chain is 65-kDa microtubule-associated protein 5 (MAP65-5) from Arabidopsis thaliana (Mouse-ear cress).